We begin with the raw amino-acid sequence, 116 residues long: Dolichyl-diphosphooligosaccharide--protein glycosyltransferase subunit DAD1 (116 aa).

The Cytoplasmic portion of the chain corresponds to 1–32 (MAKSSATKDAQALFHSLRSAYAATPTNLKIID). A helical membrane pass occupies residues 33 to 53 (LYVIFAISTALIQVVYMAIVG). Topologically, residues 54-56 (SFP) are lumenal. Residues 57 to 77 (FNSFLSGVLSCIGTAVLAVCL) form a helical membrane-spanning segment. At 78 to 95 (RIQVNKENKEFKDLPPER) the chain is on the cytoplasmic side. A helical membrane pass occupies residues 96-116 (AFADFVLCNLVLHLVIMNFLG).

The protein belongs to the DAD/OST2 family. As to quaternary structure, component of the oligosaccharyltransferase (OST) complex.

The protein resides in the endoplasmic reticulum membrane. Its pathway is protein modification; protein glycosylation. Subunit of the oligosaccharyl transferase (OST) complex that catalyzes the initial transfer of a defined glycan (Glc(3)Man(9)GlcNAc(2) in eukaryotes) from the lipid carrier dolichol-pyrophosphate to an asparagine residue within an Asn-X-Ser/Thr consensus motif in nascent polypeptide chains, the first step in protein N-glycosylation. N-glycosylation occurs cotranslationally and the complex associates with the Sec61 complex at the channel-forming translocon complex that mediates protein translocation across the endoplasmic reticulum (ER). All subunits are required for a maximal enzyme activity. In Solanum lycopersicum (Tomato), this protein is Dolichyl-diphosphooligosaccharide--protein glycosyltransferase subunit DAD1 (DAD1).